We begin with the raw amino-acid sequence, 316 residues long: Beta-ketoacyl-[acyl-carrier-protein] synthase III (316 aa).

Catalysis depends on residues C112 and H243. Residues 244–248 are ACP-binding; it reads QANLR. N273 is an active-site residue.

Belongs to the thiolase-like superfamily. FabH family. In terms of assembly, homodimer.

The protein resides in the cytoplasm. It catalyses the reaction malonyl-[ACP] + acetyl-CoA + H(+) = 3-oxobutanoyl-[ACP] + CO2 + CoA. It functions in the pathway lipid metabolism; fatty acid biosynthesis. Its function is as follows. Catalyzes the condensation reaction of fatty acid synthesis by the addition to an acyl acceptor of two carbons from malonyl-ACP. Catalyzes the first condensation reaction which initiates fatty acid synthesis and may therefore play a role in governing the total rate of fatty acid production. Possesses both acetoacetyl-ACP synthase and acetyl transacylase activities. Its substrate specificity determines the biosynthesis of branched-chain and/or straight-chain of fatty acids. This chain is Beta-ketoacyl-[acyl-carrier-protein] synthase III, found in Actinobacillus succinogenes (strain ATCC 55618 / DSM 22257 / CCUG 43843 / 130Z).